A 505-amino-acid polypeptide reads, in one-letter code: RNA-splicing ligase RtcB homolog (505 aa).

5 residues coordinate Mn(2+): Asp-119, Cys-122, His-227, His-259, and His-353. Residue 226–230 coordinates GMP; sequence NHYGE. Residues 353–354, 402–405, Ser-409, 428–431, and Lys-504 each bind GMP; these read HN, GGTM, and HGAG. Residue His-428 is the GMP-histidine intermediate of the active site.

This sequence belongs to the RtcB family. In terms of assembly, catalytic component of the tRNA-splicing ligase complex. Mn(2+) serves as cofactor.

It catalyses the reaction a 3'-end 3'-phospho-ribonucleotide-RNA + a 5'-end dephospho-ribonucleoside-RNA + GTP = a ribonucleotidyl-ribonucleotide-RNA + GMP + diphosphate. It carries out the reaction a 3'-end 2',3'-cyclophospho-ribonucleotide-RNA + a 5'-end dephospho-ribonucleoside-RNA + GTP + H2O = a ribonucleotidyl-ribonucleotide-RNA + GMP + diphosphate + H(+). Its function is as follows. Catalytic subunit of the tRNA-splicing ligase complex that acts by directly joining spliced tRNA halves to mature-sized tRNAs by incorporating the precursor-derived splice junction phosphate into the mature tRNA as a canonical 3',5'-phosphodiester. May act as an RNA ligase with broad substrate specificity, and may function toward other RNAs. In Brugia malayi (Filarial nematode worm), this protein is RNA-splicing ligase RtcB homolog.